A 381-amino-acid polypeptide reads, in one-letter code: Homoserine O-succinyltransferase (381 aa).

In terms of domain architecture, AB hydrolase-1 spans 45 to 360; the sequence is NAVLVCHALN…PHGHDAFLLD (316 aa). Residue Ser151 is the Nucleophile of the active site. Arg221 contacts substrate. Catalysis depends on residues Asp321 and His354. Asp355 serves as a coordination point for substrate.

The protein belongs to the AB hydrolase superfamily. MetX family. Homodimer.

The protein localises to the cytoplasm. The enzyme catalyses L-homoserine + succinyl-CoA = O-succinyl-L-homoserine + CoA. The protein operates within amino-acid biosynthesis; L-methionine biosynthesis via de novo pathway; O-succinyl-L-homoserine from L-homoserine: step 1/1. In terms of biological role, transfers a succinyl group from succinyl-CoA to L-homoserine, forming succinyl-L-homoserine. This chain is Homoserine O-succinyltransferase, found in Paraburkholderia phytofirmans (strain DSM 17436 / LMG 22146 / PsJN) (Burkholderia phytofirmans).